A 158-amino-acid chain; its full sequence is Ribonuclease H (158 aa).

The RNase H type-1 domain occupies 2-143 (PEKIIELFTD…VDALLNRVMD (142 aa)). Asp11, Glu49, Asp71, and Asp135 together coordinate Mg(2+).

The protein belongs to the RNase H family. As to quaternary structure, monomer. It depends on Mg(2+) as a cofactor.

The protein localises to the cytoplasm. It carries out the reaction Endonucleolytic cleavage to 5'-phosphomonoester.. Endonuclease that specifically degrades the RNA of RNA-DNA hybrids. The chain is Ribonuclease H from Acidithiobacillus ferrooxidans (strain ATCC 23270 / DSM 14882 / CIP 104768 / NCIMB 8455) (Ferrobacillus ferrooxidans (strain ATCC 23270)).